Here is a 612-residue protein sequence, read N- to C-terminus: Rhotekin-2 (612 aa).

Residues Ile3–Thr79 form the REM-1 domain. The PH domain maps to Asp285 to Tyr392. Disordered stretches follow at residues Arg483–Glu530 and Glu574–Val612. Low complexity predominate over residues Pro486–Ser498.

The sequence is that of Rhotekin-2 (rtkn2) from Xenopus laevis (African clawed frog).